Here is a 505-residue protein sequence, read N- to C-terminus: ATP synthase subunit alpha, cyanelle (505 aa).

170 to 177 (GDRQTGKT) lines the ATP pocket.

Belongs to the ATPase alpha/beta chains family. F-type ATPases have 2 components, CF(1) - the catalytic core - and CF(0) - the membrane proton channel. CF(1) has five subunits: alpha(3), beta(3), gamma(1), delta(1), epsilon(1). CF(0) has four main subunits: a, b, b' and c.

It localises to the plastid. Its subcellular location is the cyanelle thylakoid membrane. It carries out the reaction ATP + H2O + 4 H(+)(in) = ADP + phosphate + 5 H(+)(out). Produces ATP from ADP in the presence of a proton gradient across the membrane. The alpha chain is a regulatory subunit. The chain is ATP synthase subunit alpha, cyanelle from Cyanophora paradoxa.